The primary structure comprises 247 residues: NCT transcriptional regulatory complex subunit A (247 aa).

The span at 1–12 shows a compositional bias: basic and acidic residues; sequence MTDQDSTYRPRS. 3 disordered regions span residues 1–31, 48–82, and 212–247; these read MTDQ…SPIY, FFAP…SPDM, and VPDQ…DDSD. The segment covering 13 to 22 has biased composition (polar residues); it reads PDLSTFQSSI.

It belongs to the NC2 alpha/DRAP1 family. In terms of assembly, forms the NCT transcriptional regulatory complex with nctB and mot1.

The protein resides in the nucleus. Part of the NCT transcriptional regulatory complex that acts as a key regulator of ergosterol biosynthesis and the azole exporter cdr1B. The NCT complex binds the promoters of genes linked to azole susceptibility, and especially represses the expression of cdr1B transporter. This is NCT transcriptional regulatory complex subunit A from Aspergillus fumigatus (strain CBS 144.89 / FGSC A1163 / CEA10) (Neosartorya fumigata).